Reading from the N-terminus, the 327-residue chain is Methionyl-tRNA formyltransferase (327 aa).

121-124 (SLLP) is a binding site for (6S)-5,6,7,8-tetrahydrofolate.

It belongs to the Fmt family.

It carries out the reaction L-methionyl-tRNA(fMet) + (6R)-10-formyltetrahydrofolate = N-formyl-L-methionyl-tRNA(fMet) + (6S)-5,6,7,8-tetrahydrofolate + H(+). Its function is as follows. Attaches a formyl group to the free amino group of methionyl-tRNA(fMet). The formyl group appears to play a dual role in the initiator identity of N-formylmethionyl-tRNA by promoting its recognition by IF2 and preventing the misappropriation of this tRNA by the elongation apparatus. This is Methionyl-tRNA formyltransferase from Burkholderia pseudomallei (strain K96243).